The sequence spans 210 residues: Thymidylate kinase (210 aa).

10–17 (GPEGAGKS) lines the ATP pocket.

This sequence belongs to the thymidylate kinase family.

The catalysed reaction is dTMP + ATP = dTDP + ADP. Phosphorylation of dTMP to form dTDP in both de novo and salvage pathways of dTTP synthesis. This Pseudomonas savastanoi pv. phaseolicola (strain 1448A / Race 6) (Pseudomonas syringae pv. phaseolicola (strain 1448A / Race 6)) protein is Thymidylate kinase.